The following is a 518-amino-acid chain: GMP synthase [glutamine-hydrolyzing] (518 aa).

A Glutamine amidotransferase type-1 domain is found at R6–D200. C84 functions as the Nucleophile in the catalytic mechanism. Active-site residues include H175 and E177. The region spanning W201 to R393 is the GMPS ATP-PPase domain. S228–S234 is a binding site for ATP.

In terms of assembly, homodimer.

It carries out the reaction XMP + L-glutamine + ATP + H2O = GMP + L-glutamate + AMP + diphosphate + 2 H(+). The protein operates within purine metabolism; GMP biosynthesis; GMP from XMP (L-Gln route): step 1/1. In terms of biological role, catalyzes the synthesis of GMP from XMP. The sequence is that of GMP synthase [glutamine-hydrolyzing] from Cereibacter sphaeroides (strain ATCC 17023 / DSM 158 / JCM 6121 / CCUG 31486 / LMG 2827 / NBRC 12203 / NCIMB 8253 / ATH 2.4.1.) (Rhodobacter sphaeroides).